A 333-amino-acid polypeptide reads, in one-letter code: DNA-directed RNA polymerase subunit alpha (333 aa).

An alpha N-terminal domain (alpha-NTD) region spans residues 1–233 (MVREKIRVST…DLFIPFLHAE (233 aa)). Positions 267 to 333 (KEIALKSIFI…DFLEIEKHFA (67 aa)) are alpha C-terminal domain (alpha-CTD).

Belongs to the RNA polymerase alpha chain family. As to quaternary structure, in plastids the minimal PEP RNA polymerase catalytic core is composed of four subunits: alpha, beta, beta', and beta''. When a (nuclear-encoded) sigma factor is associated with the core the holoenzyme is formed, which can initiate transcription.

The protein resides in the plastid. It localises to the chloroplast. The catalysed reaction is RNA(n) + a ribonucleoside 5'-triphosphate = RNA(n+1) + diphosphate. DNA-dependent RNA polymerase catalyzes the transcription of DNA into RNA using the four ribonucleoside triphosphates as substrates. This is DNA-directed RNA polymerase subunit alpha from Glycine max (Soybean).